A 178-amino-acid chain; its full sequence is Acireductone dioxygenase (178 aa).

Residues 1–22 form a disordered region; that stretch reads MKAYWYDNKPGDQREPHDSGRP. The span at 9–22 shows a compositional bias: basic and acidic residues; that stretch reads KPGDQREPHDSGRP. Fe(2+) contacts are provided by histidine 81, histidine 83, glutamate 87, and histidine 126. Residues histidine 81, histidine 83, glutamate 87, and histidine 126 each contribute to the Ni(2+) site.

Belongs to the acireductone dioxygenase (ARD) family. Fe(2+) serves as cofactor. Ni(2+) is required as a cofactor.

It localises to the cytoplasm. Its subcellular location is the nucleus. The catalysed reaction is 1,2-dihydroxy-5-(methylsulfanyl)pent-1-en-3-one + O2 = 4-methylsulfanyl-2-oxobutanoate + formate + 2 H(+). It carries out the reaction 1,2-dihydroxy-5-(methylsulfanyl)pent-1-en-3-one + O2 = 3-(methylsulfanyl)propanoate + CO + formate + 2 H(+). Its pathway is amino-acid biosynthesis; L-methionine biosynthesis via salvage pathway; L-methionine from S-methyl-5-thio-alpha-D-ribose 1-phosphate: step 5/6. In terms of biological role, catalyzes 2 different reactions between oxygen and the acireductone 1,2-dihydroxy-3-keto-5-methylthiopentene (DHK-MTPene) depending upon the metal bound in the active site. Fe-containing acireductone dioxygenase (Fe-ARD) produces formate and 2-keto-4-methylthiobutyrate (KMTB), the alpha-ketoacid precursor of methionine in the methionine recycle pathway. Ni-containing acireductone dioxygenase (Ni-ARD) produces methylthiopropionate, carbon monoxide and formate, and does not lie on the methionine recycle pathway. The polypeptide is Acireductone dioxygenase (adi1) (Emericella nidulans (strain FGSC A4 / ATCC 38163 / CBS 112.46 / NRRL 194 / M139) (Aspergillus nidulans)).